The sequence spans 98 residues: MNLYDVIKKPVITEKSMYALEEGKYTFEVDTRAHKLLIKQAVEAAFDGVKVASVNTVNVKPKAKRVGRYTGFTSKTKKAIITLTADSKAIELFAVEAE.

It belongs to the universal ribosomal protein uL23 family. As to quaternary structure, part of the 50S ribosomal subunit. Contacts protein L29, and trigger factor when it is bound to the ribosome.

In terms of biological role, one of the early assembly proteins it binds 23S rRNA. One of the proteins that surrounds the polypeptide exit tunnel on the outside of the ribosome. Forms the main docking site for trigger factor binding to the ribosome. The chain is Large ribosomal subunit protein uL23 from Streptococcus equi subsp. equi (strain 4047).